The chain runs to 963 residues: Copalyl diphosphate synthase (963 aa).

Positions 1-539 (MSPMDLQESA…EAYILAALKR (539 aa)) are type II terpene cyclase (TC). A substrate binding region spans residues 227 to 292 (ATQWDDECED…FIEKIRSYLH (66 aa)). Mg(2+)-binding residues include Asp-311 and Asp-314. The DXDD motif lies at 311–314 (DADD). The NSE/DTE motif lies at 333–341 (AMLKEFEEE). Substrate-binding positions include 337–341 (EFEEE) and 521–522 (VT). Residues 540–659 (AADLPDENAE…SVSVHTDHSD (120 aa)) form a linker region. Positions 627–648 (TNGHYVNGTNHETPLTNGISNG) are enriched in polar residues. The segment at 627 to 657 (TNGHYVNGTNHETPLTNGISNGDSVSVHTDH) is disordered. A geranylfarnesyl diphosphate synthase (PT) region spans residues 660–963 (SYYQRSDWTA…KILARMSLEL (304 aa)). Residues Lys-688, Arg-691, and His-720 each contribute to the isopentenyl diphosphate site. Mg(2+) is bound by residues Asp-727 and Asp-731. Positions 727–731 (DDIQD) match the DDXXD 1 motif. Arg-736 lines the dimethylallyl diphosphate pocket. Arg-737 contacts isopentenyl diphosphate. Dimethylallyl diphosphate is bound by residues Lys-814, Thr-815, Gln-848, Asn-855, Lys-865, and Lys-875. The DDXXD 2 signature appears at 851–855 (DDYLN).

The protein in the N-terminal section; belongs to the terpene synthase family. In the C-terminal section; belongs to the FPP/GGPP synthase family. Homohexamer. Mg(2+) is required as a cofactor.

The enzyme catalyses isopentenyl diphosphate + (2E,6E)-farnesyl diphosphate = (2E,6E,10E)-geranylgeranyl diphosphate + diphosphate. It catalyses the reaction (2E,6E,10E)-geranylgeranyl diphosphate = (+)-copalyl diphosphate. Its function is as follows. Bifunctional terpene synthase that possesses both prenyltransferase and type II terpene cyclase activity, converting isopentenyl diphosphate (IPP) and dimethylallyl diphosphate (DMAPP) into geranylgeranyl diphosphate (GGPP) and further converting GGPP into copalyl diphosphate, respectively. The polypeptide is Copalyl diphosphate synthase (Talaromyces verruculosus (Penicillium verruculosum)).